We begin with the raw amino-acid sequence, 77 residues long: Structural DNA-binding protein p10 (77 aa).

The segment covering 1 to 12 has biased composition (polar residues); the sequence is MPTKAGTKSTAN. A disordered region spans residues 1-38; the sequence is MPTKAGTKSTANKKTTKGPSKSGSAKGHTGKTHATALH. The span at 17-27 shows a compositional bias: low complexity; sequence KGPSKSGSAKG.

The protein belongs to the asfivirus P10 family.

The protein localises to the virion. May play a role in genome packaging through direct interaction with viral DNA. Binds to ssDNA and dsDNA with the same apparent affinity in vitro. The chain is Structural DNA-binding protein p10 from Ornithodoros (relapsing fever ticks).